Consider the following 1588-residue polypeptide: Pentafunctional AROM polypeptide (1588 aa).

The tract at residues 1–392 (MVQLAKVPIL…YGDSAQFVSD (392 aa)) is 3-dehydroquinate synthase. Residues 43–45 (DTN), 78–81 (ETSK), 109–111 (GGV), and aspartate 114 contribute to the NAD(+) site. 7-phospho-2-dehydro-3-deoxy-D-arabino-heptonate is bound at residue arginine 125. 134 to 135 (TS) contacts NAD(+). Residues aspartate 141 and lysine 147 each coordinate 7-phospho-2-dehydro-3-deoxy-D-arabino-heptonate. Residue lysine 156 coordinates NAD(+). Residue asparagine 157 coordinates 7-phospho-2-dehydro-3-deoxy-D-arabino-heptonate. NAD(+) contacts are provided by residues 174–177 (WLET) and asparagine 185. A Zn(2+)-binding site is contributed by glutamate 189. Residues 189–192 (EVIK) and lysine 258 each bind 7-phospho-2-dehydro-3-deoxy-D-arabino-heptonate. The active-site Proton acceptor; for 3-dehydroquinate synthase activity is glutamate 268. 7-phospho-2-dehydro-3-deoxy-D-arabino-heptonate-binding positions include 272–276 (RNLLN) and histidine 279. Residue histidine 279 participates in Zn(2+) binding. Histidine 283 serves as the catalytic Proton acceptor; for 3-dehydroquinate synthase activity. 7-phospho-2-dehydro-3-deoxy-D-arabino-heptonate-binding residues include histidine 295 and lysine 364. Histidine 295 is a Zn(2+) binding site. An EPSP synthase region spans residues 405-871 (VYPFKDIPAD…WDVLHSELGA (467 aa)). Residue cysteine 853 is the For EPSP synthase activity of the active site. Residues 890 to 1080 (SVVIIGMRAA…IPSGRSAFVC (191 aa)) are shikimate kinase. Position 895-902 (895-902 (GMRAAGKT)) interacts with ATP. A 3-dehydroquinase region spans residues 1081–1293 (LTFDDLTEQT…AAPGQLTVAQ (213 aa)). Histidine 1198 acts as the Proton acceptor; for 3-dehydroquinate dehydratase activity in catalysis. Lysine 1227 functions as the Schiff-base intermediate with substrate; for 3-dehydroquinate dehydratase activity in the catalytic mechanism. Positions 1306–1588 (PKELFVVGKP…KAIFDAVTKE (283 aa)) are shikimate dehydrogenase.

The protein in the N-terminal section; belongs to the sugar phosphate cyclases superfamily. Dehydroquinate synthase family. It in the 2nd section; belongs to the EPSP synthase family. In the 3rd section; belongs to the shikimate kinase family. This sequence in the 4th section; belongs to the type-I 3-dehydroquinase family. The protein in the C-terminal section; belongs to the shikimate dehydrogenase family. As to quaternary structure, homodimer. The cofactor is Zn(2+).

The protein localises to the cytoplasm. The catalysed reaction is 7-phospho-2-dehydro-3-deoxy-D-arabino-heptonate = 3-dehydroquinate + phosphate. It carries out the reaction 3-dehydroquinate = 3-dehydroshikimate + H2O. It catalyses the reaction shikimate + NADP(+) = 3-dehydroshikimate + NADPH + H(+). The enzyme catalyses shikimate + ATP = 3-phosphoshikimate + ADP + H(+). The catalysed reaction is 3-phosphoshikimate + phosphoenolpyruvate = 5-O-(1-carboxyvinyl)-3-phosphoshikimate + phosphate. The protein operates within metabolic intermediate biosynthesis; chorismate biosynthesis; chorismate from D-erythrose 4-phosphate and phosphoenolpyruvate: step 2/7. It functions in the pathway metabolic intermediate biosynthesis; chorismate biosynthesis; chorismate from D-erythrose 4-phosphate and phosphoenolpyruvate: step 3/7. Its pathway is metabolic intermediate biosynthesis; chorismate biosynthesis; chorismate from D-erythrose 4-phosphate and phosphoenolpyruvate: step 4/7. It participates in metabolic intermediate biosynthesis; chorismate biosynthesis; chorismate from D-erythrose 4-phosphate and phosphoenolpyruvate: step 5/7. The protein operates within metabolic intermediate biosynthesis; chorismate biosynthesis; chorismate from D-erythrose 4-phosphate and phosphoenolpyruvate: step 6/7. Functionally, the AROM polypeptide catalyzes 5 consecutive enzymatic reactions in prechorismate polyaromatic amino acid biosynthesis. The protein is Pentafunctional AROM polypeptide of Saccharomyces cerevisiae (strain YJM789) (Baker's yeast).